The chain runs to 121 residues: Small ribosomal subunit protein uS13 (121 aa).

A disordered region spans residues 97–121; it reads VRGQRTRTNARTRRGARKTVAGKKK. Over residues 100–121 the composition is skewed to basic residues; the sequence is QRTRTNARTRRGARKTVAGKKK.

This sequence belongs to the universal ribosomal protein uS13 family. In terms of assembly, part of the 30S ribosomal subunit. Forms a loose heterodimer with protein S19. Forms two bridges to the 50S subunit in the 70S ribosome.

Its function is as follows. Located at the top of the head of the 30S subunit, it contacts several helices of the 16S rRNA. In the 70S ribosome it contacts the 23S rRNA (bridge B1a) and protein L5 of the 50S subunit (bridge B1b), connecting the 2 subunits; these bridges are implicated in subunit movement. Contacts the tRNAs in the A and P-sites. This is Small ribosomal subunit protein uS13 from Synechococcus sp. (strain WH7803).